A 397-amino-acid chain; its full sequence is Alpha-lytic protease (397 aa).

The N-terminal stretch at 1–24 is a signal peptide; the sequence is MYVSNHRSRRVARVSVSCLVAALA. A propeptide spanning residues 25–199 is cleaved from the precursor; sequence AMSCGAALAA…ESSPGKLQTT (175 aa). Cys-216 and Cys-236 are disulfide-bonded. Catalysis depends on charge relay system residues His-235 and Asp-262. Intrachain disulfides connect Cys-300–Cys-310 and Cys-336–Cys-369. Ser-342 (charge relay system) is an active-site residue.

Belongs to the peptidase S1 family.

It catalyses the reaction Preferential cleavage: Ala-|-Xaa, Val-|-Xaa in bacterial cell walls, elastin and other proteins.. This is Alpha-lytic protease (alpha-LP) from Lysobacter enzymogenes.